The primary structure comprises 275 residues: Small ribosomal subunit protein uS2 (275 aa).

Positions 226–275 (AAAPNSASVREEEFSAEAGDEGKGRRAPAKKATEKKADAPAAAPEAPAAE) are disordered. The segment covering 264 to 275 (APAAAPEAPAAE) has biased composition (low complexity).

Belongs to the universal ribosomal protein uS2 family.

This Xanthomonas campestris pv. campestris (strain 8004) protein is Small ribosomal subunit protein uS2.